Consider the following 448-residue polypeptide: Nucleoprotein (448 aa).

3 stretches are compositionally biased toward polar residues: residues 1 to 20 (MSFT…NRSG), 29 to 38 (QSDQSRNVQT), and 45 to 55 (PKQTATSQLPS). A disordered region spans residues 1–55 (MSFTPGKQSSSRASFGNRSGNGILKWADQSDQSRNVQTRGRRAQPKQTATSQLPS). The segment at 52–194 (QLPSGGNVVP…GYYIEGSGRS (143 aa)) is RNA-binding. A CoV N NTD domain is found at 61 to 190 (PYYSWFSGIT…VLPQGYYIEG (130 aa)). RNA-binding residues include Arg106, Arg122, and Arg164. 3 disordered regions span residues 157–231 (TPAD…VTPD), 266–297 (ILNK…NFGG), and 385–448 (GMMN…TSEI). Residue Ser167 is modified to Phosphoserine; by host. The residue at position 174 (Thr174) is a Phosphothreonine; by host. Ser191 is subject to Phosphoserine; by host. Positions 193 to 223 (RSAPNSRSTSRASSRASSAGSRSRANSGNRT) are enriched in low complexity. A CoV N CTD domain is found at 259-384 (AKEIRQKILN…ENLNAYQQQD (126 aa)). Residues 266–276 (ILNKPRQKRSP) show a composition bias toward basic residues. Residues 266–384 (ILNKPRQKRS…ENLNAYQQQD (119 aa)) form a dimerization region. A Phosphoserine; by host modification is found at Ser390. Positions 399–409 (QKNGQGENDNI) are enriched in polar residues. Residues 422-439 (KSRELTAEDISLLKKMDE) show a composition bias toward basic and acidic residues. The residue at position 423 (Ser423) is a Phosphoserine; by host. Thr427 is subject to Phosphothreonine; by host.

It belongs to the betacoronavirus nucleocapsid protein family. Homooligomer. Both monomeric and oligomeric forms interact with RNA. Interacts with protein M. Interacts with NSP3; this interaction serves to tether the genome to the newly translated replicase-transcriptase complex at a very early stage of infection. ADP-ribosylated. The ADP-ribosylation is retained in the virion during infection. Post-translationally, phosphorylated on serine and threonine residues.

It is found in the virion. The protein resides in the host endoplasmic reticulum-Golgi intermediate compartment. Its subcellular location is the host Golgi apparatus. In terms of biological role, packages the positive strand viral genome RNA into a helical ribonucleocapsid (RNP) and plays a fundamental role during virion assembly through its interactions with the viral genome and membrane protein M. Plays an important role in enhancing the efficiency of subgenomic viral RNA transcription as well as viral replication. The protein is Nucleoprotein of Bos taurus (Bovine).